A 525-amino-acid chain; its full sequence is Rho guanine nucleotide exchange factor gef3 (525 aa).

The DH domain maps to 72–268 (AIISVLEEFR…EIASQRMNEL (197 aa)).

The protein localises to the cytoplasm. Its function is as follows. Has a role in the control of cell polarity and cytokinesis. Involved in bipolar growth and septum formation. This chain is Rho guanine nucleotide exchange factor gef3 (gef3), found in Schizosaccharomyces pombe (strain 972 / ATCC 24843) (Fission yeast).